The chain runs to 434 residues: MREAHPIERAVGMAYYASDSDGTGGRLRDSPADFRVRELEAFDTQPADAPTGDYPWLVVRATLHEWDTNDFARELANTVGMSRERVRWAGTKDRHAVTTQLFAVRDLDAAQVPEIRNADIEVVGRAGRGLEFGDLAGNAFEIVVRDPDAPERAAAVADELAAFGGGTVGTPNYFGQQRFGSKRPVTHEVGLAILRDDWEAAAMAYLGAPTEHEPADSQRAREYVAETRDWTGALAEFPQRLRYERTMLHELADGGSFRDAVETFPSNLQQLFVHAAQSYVFNRIVSERMARGLPFGEPVAGDVVWFADSDADAAVAQPDAARQQRVTDSRVDVMARHCERGRAFVTAPLVGTDTEFADGDPGEITRGVLDDLGLSRADFDLPGEFDSAGSRRAILLRPDLTVSHDPLAFEFALPSGSYATVVLREFLKPSPLAL.

D93 functions as the Nucleophile in the catalytic mechanism. Residues 169–396 (GTPNYFGQQR…SAGSRRAILL (228 aa)) form the TRUD domain.

This sequence belongs to the pseudouridine synthase TruD family.

The enzyme catalyses uridine(13) in tRNA = pseudouridine(13) in tRNA. Functionally, could be responsible for synthesis of pseudouridine from uracil-13 in transfer RNAs. This is Probable tRNA pseudouridine synthase D from Halobacterium salinarum (strain ATCC 29341 / DSM 671 / R1).